The chain runs to 518 residues: Protein nucleotidyltransferase YdiU (518 aa).

Over residues 1 to 10 (MTHLHFDNRL) the composition is skewed to basic and acidic residues. Positions 1 to 25 (MTHLHFDNRLRQQLPGDPEEGARRR) are disordered. Residues glycine 100, glycine 102, arginine 103, lysine 123, aspartate 135, glycine 136, arginine 193, and arginine 200 each coordinate ATP. Catalysis depends on aspartate 270, which acts as the Proton acceptor. Asparagine 271 and aspartate 280 together coordinate Mg(2+). ATP is bound at residue aspartate 280.

This sequence belongs to the SELO family. Mg(2+) is required as a cofactor. It depends on Mn(2+) as a cofactor.

It carries out the reaction L-seryl-[protein] + ATP = 3-O-(5'-adenylyl)-L-seryl-[protein] + diphosphate. The enzyme catalyses L-threonyl-[protein] + ATP = 3-O-(5'-adenylyl)-L-threonyl-[protein] + diphosphate. The catalysed reaction is L-tyrosyl-[protein] + ATP = O-(5'-adenylyl)-L-tyrosyl-[protein] + diphosphate. It catalyses the reaction L-histidyl-[protein] + UTP = N(tele)-(5'-uridylyl)-L-histidyl-[protein] + diphosphate. It carries out the reaction L-seryl-[protein] + UTP = O-(5'-uridylyl)-L-seryl-[protein] + diphosphate. The enzyme catalyses L-tyrosyl-[protein] + UTP = O-(5'-uridylyl)-L-tyrosyl-[protein] + diphosphate. In terms of biological role, nucleotidyltransferase involved in the post-translational modification of proteins. It can catalyze the addition of adenosine monophosphate (AMP) or uridine monophosphate (UMP) to a protein, resulting in modifications known as AMPylation and UMPylation. This Xanthomonas euvesicatoria pv. vesicatoria (strain 85-10) (Xanthomonas campestris pv. vesicatoria) protein is Protein nucleotidyltransferase YdiU.